Reading from the N-terminus, the 413-residue chain is SET and MYND domain-containing protein DDB_G0273591 (413 aa).

The 306-residue stretch at 6-311 folds into the SET domain; it reads DGLKLSNSEL…KGDQINISYL (306 aa). The MYND-type zinc finger occupies 51 to 95; that stretch reads CYNCIKLIKSPSPQQVPRCFGCNEVWYCSEKCKQDNQAKHQHYEC. Residues 205–232 are disordered; it reads DNNNNNNNNNNNNNNNNNNNNNNNNNNN. Positions 216–243 form a coiled coil; it reads NNNNNNNNNNNNNNNNNNNIEELIKLIR.

This sequence belongs to the class V-like SAM-binding methyltransferase superfamily.

Its function is as follows. Probable methyltransferase. The chain is SET and MYND domain-containing protein DDB_G0273591 from Dictyostelium discoideum (Social amoeba).